The chain runs to 199 residues: Holliday junction branch migration complex subunit RuvA (199 aa).

Residues 1 to 64 form a domain I region; it reads MFAYIKGTVE…EDIAVLYGFG (64 aa). Residues 65-143 form a domain II region; it reads TVEELTMFEM…KEQLTSSIPM (79 aa). A flexible linker region spans residues 144-151; sequence TSPENNEV. The domain III stretch occupies residues 152 to 199; it reads TGDSVLSEAVSALMVLGYGSAEASSTISGIYEKGISVEELVKKALKSL.

Belongs to the RuvA family. Homotetramer. Forms an RuvA(8)-RuvB(12)-Holliday junction (HJ) complex. HJ DNA is sandwiched between 2 RuvA tetramers; dsDNA enters through RuvA and exits via RuvB. An RuvB hexamer assembles on each DNA strand where it exits the tetramer. Each RuvB hexamer is contacted by two RuvA subunits (via domain III) on 2 adjacent RuvB subunits; this complex drives branch migration. In the full resolvosome a probable DNA-RuvA(4)-RuvB(12)-RuvC(2) complex forms which resolves the HJ.

Its subcellular location is the cytoplasm. The RuvA-RuvB-RuvC complex processes Holliday junction (HJ) DNA during genetic recombination and DNA repair, while the RuvA-RuvB complex plays an important role in the rescue of blocked DNA replication forks via replication fork reversal (RFR). RuvA specifically binds to HJ cruciform DNA, conferring on it an open structure. The RuvB hexamer acts as an ATP-dependent pump, pulling dsDNA into and through the RuvAB complex. HJ branch migration allows RuvC to scan DNA until it finds its consensus sequence, where it cleaves and resolves the cruciform DNA. This is Holliday junction branch migration complex subunit RuvA from Ruminiclostridium cellulolyticum (strain ATCC 35319 / DSM 5812 / JCM 6584 / H10) (Clostridium cellulolyticum).